We begin with the raw amino-acid sequence, 493 residues long: Glutathione hydrolase 6 (493 aa).

Over methionine 1 to proline 54 the chain is Cytoplasmic. A disordered region spans residues serine 19–glycine 52. Residues leucine 20–serine 32 show a composition bias toward acidic residues. Residues glycine 55 to valine 75 form a helical; Signal-anchor for type II membrane protein membrane-spanning segment. Residues arginine 76–phenylalanine 493 lie on the Extracellular side of the membrane. Positions arginine 83–tyrosine 105 are disordered. Residues asparagine 161 and asparagine 370 are each glycosylated (N-linked (GlcNAc...) asparagine). A compositionally biased stretch (low complexity) spans proline 442–glutamate 455. The disordered stretch occupies residues proline 442–glycine 464.

This sequence belongs to the gamma-glutamyltransferase family. In terms of assembly, heterodimer composed of the light and heavy chains. The active site is located in the light chain. Post-translationally, cleaved by autocatalysis into a large and a small subunit and the autocatalytic cleavage is essential to the functional activation of the enzyme.

It localises to the membrane. It catalyses the reaction an N-terminal (5-L-glutamyl)-[peptide] + an alpha-amino acid = 5-L-glutamyl amino acid + an N-terminal L-alpha-aminoacyl-[peptide]. It carries out the reaction glutathione + H2O = L-cysteinylglycine + L-glutamate. The enzyme catalyses an S-substituted glutathione + H2O = an S-substituted L-cysteinylglycine + L-glutamate. The protein operates within sulfur metabolism; glutathione metabolism. In terms of biological role, hydrolyzes and transfers gamma-glutamyl moieties from glutathione and other gamma-glutamyl compounds to acceptors. The polypeptide is Glutathione hydrolase 6 (Homo sapiens (Human)).